A 223-amino-acid polypeptide reads, in one-letter code: Urease accessory protein UreF (223 aa).

Belongs to the UreF family. UreD, UreF and UreG form a complex that acts as a GTP-hydrolysis-dependent molecular chaperone, activating the urease apoprotein by helping to assemble the nickel containing metallocenter of UreC. The UreE protein probably delivers the nickel.

Its subcellular location is the cytoplasm. Functionally, required for maturation of urease via the functional incorporation of the urease nickel metallocenter. The polypeptide is Urease accessory protein UreF (Paenarthrobacter aurescens (strain TC1)).